The following is a 994-amino-acid chain: Zinc finger protein basonuclin-1 (994 aa).

The disordered stretch occupies residues 1-29 (MRRRPPSRGGRGAARARETRRQPRHRSGR). The tract at residues 240-249 (MTFMLPFQFF) is hydrophobic. C2H2-type zinc fingers lie at residues 357–380 (VFCT…NAVH) and 385–414 (HKCT…PRLH). 2 disordered regions span residues 402-425 (RNRH…RDKD) and 444-472 (TVTS…FPNI). Residues 533 to 539 (PKKKSRK) carry the Nuclear localization signal motif. Phosphoserine occurs at positions 537 and 541. Positions 555–639 (NEKRHNLSSD…HNSERETEQT (85 aa)) are disordered. The segment covering 563–578 (SDEDMPLQVVSEDEQE) has biased composition (acidic residues). The span at 603-614 (PEGERPCHRESV) shows a compositional bias: basic and acidic residues. Polar residues predominate over residues 615–630 (IESSGAISQTPEQATH). 2 consecutive C2H2-type zinc fingers follow at residues 720–743 (FQCD…KNMH) and 748–775 (HTCT…LNLH). The span at 859 to 877 (STTSSMKSESSSHSSWDSD) shows a compositional bias: low complexity. A disordered region spans residues 859–881 (STTSSMKSESSSHSSWDSDGVSE). 2 consecutive C2H2-type zinc fingers follow at residues 928 to 951 (ITCH…KTVH) and 956 to 983 (HKCK…PNLH). The interval 970–994 (VRSRNRHSQNPNLHKSLASSPSHLQ) is disordered.

Interacts with HSF2BP (via C-terminus). Phosphorylation on Ser-537 and Ser-541 leads to cytoplasmic localization. In terms of tissue distribution, in epidermis, primarily detected in cells of the basal or immediately suprabasal layers (at protein level). In hair follicles, mainly expressed in the outer root sheath (at protein level). Expressed in epidermis, testis and foreskin, and to a lower extent in thymus, spleen, mammary glands, placenta, brain and heart. Expressed in the ovary, notably in oocytes.

It localises to the nucleus. The protein resides in the cytoplasm. Its subcellular location is the nucleoplasm. Transcriptional activator. It is likely involved in the regulation of keratinocytes terminal differentiation in squamous epithelia and hair follicles. Required for the maintenance of spermatogenesis. It is involved in the positive regulation of oocyte maturation, probably acting through the control of BMP15 levels and regulation of AKT signaling cascade. May also play a role in the early development of embryos. This is Zinc finger protein basonuclin-1 (BNC1) from Homo sapiens (Human).